The chain runs to 280 residues: Uroporphyrinogen-III C-methyltransferase (280 aa).

S-adenosyl-L-homocysteine-binding positions include P24, 100 to 102 (GGD), 130 to 131 (TA), M184, A213, and A241.

Belongs to the precorrin methyltransferase family. As to quaternary structure, homodimer.

It catalyses the reaction uroporphyrinogen III + 2 S-adenosyl-L-methionine = precorrin-2 + 2 S-adenosyl-L-homocysteine + H(+). It carries out the reaction uroporphyrinogen III + S-adenosyl-L-methionine = precorrin-1 + S-adenosyl-L-homocysteine + H(+). The catalysed reaction is precorrin-1 + S-adenosyl-L-methionine = precorrin-2 + S-adenosyl-L-homocysteine. It functions in the pathway cofactor biosynthesis; adenosylcobalamin biosynthesis; precorrin-2 from uroporphyrinogen III: step 1/1. It participates in porphyrin-containing compound metabolism; siroheme biosynthesis; precorrin-2 from uroporphyrinogen III: step 1/1. S-adenosylhomocysteine is an extremely powerful competitive inhibitor of the uroporphyrinogen III methylation. SUMT exhibits a substrate inhibition phenomenon at uroporphyrinogen III concentrations above 2 uM; this property might play a regulatory role in cobalamin biosynthesis. The enzyme activity is completely insensitive to feedback inhibition by cobalamin and corrinoid intermediates. Catalyzes the two successive C-2 and C-7 methylation reactions involved in the conversion of uroporphyrinogen III to precorrin-2 via the intermediate formation of precorrin-1. It is a step in the biosynthesis of both cobalamin (vitamin B12) and siroheme. Neither uroporphyrin III nor the chlorin (factor I) is a substrate of SUMT. The chain is Uroporphyrinogen-III C-methyltransferase from Sinorhizobium sp.